Consider the following 55-residue polypeptide: MAKPTTIKIRLNSTAGTGHFYVTKKNARTMTEKMTIRKYDPVARKHVEYKEGKIK.

Belongs to the bacterial ribosomal protein bL33 family.

The sequence is that of Large ribosomal subunit protein bL33 from Ruegeria sp. (strain TM1040) (Silicibacter sp.).